Here is a 162-residue protein sequence, read N- to C-terminus: Phosphopantetheine adenylyltransferase (162 aa).

Ser9 provides a ligand contact to substrate. ATP contacts are provided by residues 9-10 and His17; that span reads SF. Residues Lys41, Thr73, and Arg87 each coordinate substrate. ATP is bound by residues 88 to 90, Glu98, and 122 to 128; these read GLR and NQNISSS.

The protein belongs to the bacterial CoaD family. In terms of assembly, homohexamer. Mg(2+) serves as cofactor.

It is found in the cytoplasm. It catalyses the reaction (R)-4'-phosphopantetheine + ATP + H(+) = 3'-dephospho-CoA + diphosphate. Its pathway is cofactor biosynthesis; coenzyme A biosynthesis; CoA from (R)-pantothenate: step 4/5. Its function is as follows. Reversibly transfers an adenylyl group from ATP to 4'-phosphopantetheine, yielding dephospho-CoA (dPCoA) and pyrophosphate. This Leuconostoc mesenteroides subsp. mesenteroides (strain ATCC 8293 / DSM 20343 / BCRC 11652 / CCM 1803 / JCM 6124 / NCDO 523 / NBRC 100496 / NCIMB 8023 / NCTC 12954 / NRRL B-1118 / 37Y) protein is Phosphopantetheine adenylyltransferase.